The primary structure comprises 589 residues: Probable translation initiation factor IF-2 (589 aa).

Positions 14–229 constitute a tr-type G domain; it reads LRQPIVCVLG…LAGLAQRFLE (216 aa). Positions 23–30 are G1; the sequence is GHVDHGKT. 23-30 provides a ligand contact to GTP; that stretch reads GHVDHGKT. Residues 48-52 form a G2 region; sequence GITQR. Residues 84-87 are G3; sequence DTPG. GTP is bound by residues 84-88 and 138-141; these read DTPGH and NKID. A G4 region spans residues 138–141; the sequence is NKID. Residues 206-208 are G5; it reads SAK.

This sequence belongs to the TRAFAC class translation factor GTPase superfamily. Classic translation factor GTPase family. IF-2 subfamily.

Functionally, function in general translation initiation by promoting the binding of the formylmethionine-tRNA to ribosomes. Seems to function along with eIF-2. The protein is Probable translation initiation factor IF-2 (infB) of Thermoplasma acidophilum (strain ATCC 25905 / DSM 1728 / JCM 9062 / NBRC 15155 / AMRC-C165).